We begin with the raw amino-acid sequence, 322 residues long: Arginase-1 (322 aa).

Positions 1-27 (MSSKPQSIGVIGAPFSKGQPRGGVEEG) are disordered. Ser-7 bears the Phosphoserine mark. Lys-17 carries the N6-succinyllysine modification. Residue Ser-62 is modified to Phosphoserine. Lys-75 is modified (N6-succinyllysine). Mn(2+)-binding residues include His-101, Asp-124, His-126, and Asp-128. Substrate-binding positions include 126-130 (HTDIN), 137-139 (TGN), and Asp-183. Ser-217 carries the post-translational modification Phosphoserine. Positions 232 and 234 each coordinate Mn(2+). Positions 246 and 277 each coordinate substrate.

The protein belongs to the arginase family. Homotrimer. Interacts with CMTM6. The cofactor is Mn(2+).

It localises to the cytoplasm. The enzyme catalyses L-arginine + H2O = urea + L-ornithine. The protein operates within nitrogen metabolism; urea cycle; L-ornithine and urea from L-arginine: step 1/1. The protein is Arginase-1 (ARG1) of Bos taurus (Bovine).